The following is a 2323-amino-acid chain: MKQRKGQGPGGGRGRKKRGLSDISPSTSLPPLVEGQLRCFLKLTINKVVWKIAKPPTSVLVRVRWWGETSDGTLFCPRDALQTEPKAVRTTTRYGIRCGPKQFTSYLTDMAVLVLEVITKFDHLPVGRVQISGLAQLSPTHQINGFFTIVSPASKKLGELQVSLALEPLSETYDSYKPLPATEVTKNVLLSERELRENTESSNTQSMIPSRSCRGPAIKIDGKELAGHSSRSTTPRGKDHLYFAENSDAVKGSLCGLQQHLNQGTNVETITLRGKAPQKQLSLLNSSEFQPQISTVAKSHSDSCILSSNTPPAKDLLSALLEQGNKLRNAMLISAMNSNPDTSMLLDKVPPPMTEAIPRSSALNSSENHFKGHSADHLLPLADTGAIQLLLGSAELSQGHFWNGLGSPPDSPTPGSDEYCSSDLNDPQYDQSLLENLFYTVPKSDVGTSELPSEDDGVEPSRTMNQSKASGRSKVVESKEQKQKRAAVKKSRNPIDQQELSRTPGHTPAMSLSVDRLALLGRVHSVRIIVETMGVPPDSPHMTPSRKNFAGKPPKPTAAKKRTFFVEYHFPVGFSKSGLGKTALITEVVRLASSKITDGVVKFQQRFVCPVEFGGPMIEHWWDSNLIFQIYAKKTPQKKPEVIGSASLPLRAVIQSELLSFSSQLPVQQENGLSSLGPLKVTMELVLGHKDFTGISAKLSSSTQPAPVSAATSSDTILPETGQDTACTRNPQSSNKIHEETTKKTQNLVLPDQESANSVASNSSIFMAVPSCNLVHQINGSNKESGLLLHVLLMVPDGKDFVFGEREKQPSCNVYLNCKLFSTEEVTRSVVSWGTAQPVFNFSQVIPVSLTSKCLERLKNNVMIIETWNKVRSPGQDKLLGLVKLPLHQFYMSFKDPKISRLLLDARYPVVAVDSYMPVIDVFSGHQNGSLRVFLAMGSSAQIMMLQRLKNEEGTLPPFSPRPAHFLDQPPVASVAMPEKQGTRLMEHHFEFCVAMVKGLMPLQATVWGEADCYVQYYFPFQDSQPSVLQGPDFLENGITLKPFRTSTTLCVPDPVFNSEHHHSLLLPTDVPVQRLLLSAFSSQGLVPGGGVQFEVWCRYYYPNVRDQMVAKGTLPLSRVCAMVTMQYREDVGMQSFNLPLTSRLEHSKELKNQSSGFLDVGLRYRRSPRTAEGILAARAVSISVHIIRACGLQAAAKALAEQEPALQFSATVGVNASVTAHLSFLPKGEQRQTRPVACSFCPEFSHHIEFPCNLVTQHCSGEACFLAELLEFAEIIFAIYHENTKSVSDITSIQSCKDYLLGIVKVPTKDLLVKRSGITGWYPVILPEDKGLPQDLDLMQKIVGGLELSVSFAHPGDRERVLEAAELLGWSFESIPKDLVKKEEEVPATVTISTPRLWLPIHCVLLAGHMNIHKNTYCYLRYKLYNQEAFWTPLRKPKESTNKNQVLITFKASKRAEVTRSQSLLWYFREEKLEIQVWRAYGNDNLERPHQTDSWIGSAYVDLSRLGEKSPRTLTISGVYPLFGRNASDLSGAALRIHVLLSPLSPHTEPARELDSMDCSSHSESEQHPRKSDALQLSPPHVLQTSPTSTQVHGNSAAAQVCPAQEGPPELAGTFAVSILVERAMHLSLKGSPLTDRKVSVPSCCVSFATATELSPVYTHVVENTDSPIWGFHQQARLSKELLLDPHQTLVFKVWHKGDEERVVGFASVDLSPLLSGFQFICGWYNITDFSGECQGQIKVAISPMESLMHLKEERQARRGIDTPGALIPLFSALSFPASAGCDAFPRPIARHVEGQLAHTSPKEDGLSSPARNGAIRSQAARHEEHVQNIRRFHESLQHGEAVLTSDEKLTTAPSSSHTSILTSLRKNLSELDEIQKYFSQKLSKPFLPFSSQSSPAVSQSQESQRDPVAAGTGRQDPENQCILEKSNHLVSQVSSLISDLQTLTRGSQAALTSQQARSRSRAVTTIPDAQGTEAAGEGSTTLEEPLAGAIEASTDSLPPPVEEPSKGGGMLHESLEQTMPITRVQSIDDTEVGPDYSDEDYEEDIIEPRTLNEITTVTDRTSPWSSFMSDMSEVLSPQPTEVQREGPSCPPEPFPREELKVKSSPQKAVSPQPAQGSPSQSGVCEGGAYKIEVEDLASAKPQPVPSLTFSEAQEGSDSVGWRASQINQVRKPMPEMLAESEAFSSEFSDSSESFETFPLHLPSQSKREDYKDSPAVRQKQVPTGSEVSTRQTLLLPEPVVVPNFFLPPQQLEASLRMISHSPGLPPAATTDQDKSEATRGALAQRPCRPRPYSIPPNLPEEETRRIARIFSSQYSKKTEET.

Disordered regions lie at residues 1–27 (MKQR…SPST), 193–215 (RELR…SCRG), 402–426 (WNGL…DLND), 444–509 (SDVG…HTPA), 537–556 (PDSP…PPKP), and 698–745 (KLSS…TKKT). A compositionally biased stretch (polar residues) spans 200 to 209 (ESSNTQSMIP). The residue at position 453 (serine 453) is a Phosphoserine. The span at 474-483 (KVVESKEQKQ) shows a compositional bias: basic and acidic residues. Residues 504–663 (PGHTPAMSLS…IQSELLSFSS (160 aa)) form the C2 1 domain. Positions 698–735 (KLSSSTQPAPVSAATSSDTILPETGQDTACTRNPQSSN) are enriched in polar residues. Serine 713 bears the Phosphoserine mark. C2 domains follow at residues 771-903 (SCNL…SRLL), 969-1131 (QPPV…YRED), 1155-1323 (SSGF…TGWY), and 1383-1517 (KEEE…TLTI). Over residues 1550–1574 (EPARELDSMDCSSHSESEQHPRKSD) the composition is skewed to basic and acidic residues. Disordered regions lie at residues 1550–1599 (EPAR…NSAA) and 1798–1824 (LAHT…AARH). Residues 1584 to 1599 (LQTSPTSTQVHGNSAA) are compositionally biased toward polar residues. One can recognise a C2 6 domain in the interval 1598–1726 (AAAQVCPAQE…SGFQFICGWY (129 aa)). Residue serine 1871 is modified to Phosphoserine. Disordered stretches follow at residues 1891–1918 (FSSQ…GRQD), 1952–2013 (ALTS…GGML), 2074–2163 (SEVL…SVGW), 2182–2231 (SEAF…EVST), and 2261–2323 (SHSP…TEET). The segment covering 1892–1904 (SSQSSPAVSQSQE) has biased composition (low complexity). Polar residues-rich tracts occupy residues 1952-1965 (ALTS…SRAV) and 2074-2083 (SEVLSPQPTE). A compositionally biased stretch (low complexity) spans 2110-2125 (AVSPQPAQGSPSQSGV). Polar residues predominate over residues 2147 to 2158 (PSLTFSEAQEGS). Over residues 2182–2197 (SEAFSSEFSDSSESFE) the composition is skewed to low complexity. Residues 2207–2216 (SKREDYKDSP) show a composition bias toward basic and acidic residues. Residues 2222–2231 (QVPTGSEVST) show a composition bias toward polar residues.

Interacts with OFD1; OFD1 may act as a negative regulator of C2CD3. Associates with the BBSome complex. Interacts with IFT88, BBS4 and PCM1.

The protein resides in the cytoplasm. It localises to the cytoskeleton. The protein localises to the cilium basal body. Its subcellular location is the microtubule organizing center. It is found in the centrosome. The protein resides in the centriole. Its function is as follows. Component of the centrioles that acts as a positive regulator of centriole elongation. Promotes assembly of centriolar distal appendage, a structure at the distal end of the mother centriole that acts as an anchor of the cilium, and is required for recruitment of centriolar distal appendages proteins CEP83, SCLT1, CEP89, FBF1 and CEP164. Not required for centriolar satellite integrity or RAB8 activation. Required for primary cilium formation. Required for sonic hedgehog/SHH signaling and for proteolytic processing of GLI3. This chain is C2 domain-containing protein 3 (C2cd3), found in Mus musculus (Mouse).